The chain runs to 411 residues: Adherens junction-associated protein 1 (411 aa).

The first 43 residues, 1–43, serve as a signal peptide directing secretion; sequence MWIQQLLGLSSMSIRWPGRPLGSHAWILIAMFQLAVDLPACEA. Residues 44–282 are Extracellular-facing; the sequence is LGPGPEFWLL…GEASGLAVHQ (239 aa). Disordered stretches follow at residues 89–108, 115–197, and 239–268; these read IHGQ…RDQA, AGLA…SNTF, and SLDP…VTQP. Residues 115 to 146 are compositionally biased toward low complexity; sequence AGLAKPPAAAKSSPSLASSSSSSSSAVAGGAP. Polar residues predominate over residues 166–178; that stretch reads SFDSRGSRPTTET. Low complexity predominate over residues 247–263; the sequence is PGGVSTTEPSTSPSNNG. The chain crosses the membrane as a helical span at residues 283–303; that stretch reads IITITVSLIMVIAALITTLVL. Residues 303–411 are targeting signals; sequence LKNCCAQSGN…VSEKWFEISC (109 aa). Residues 304 to 411 lie on the Cytoplasmic side of the membrane; the sequence is KNCCAQSGNT…VSEKWFEISC (108 aa). The segment at 311–330 is disordered; sequence GNTRRNSHQRKTNQQEESCQ.

As to quaternary structure, forms a complex with CDH1 and CTNNB1; interacts directly with CTNNB1. Interacts with AP1M2. Interacts with isoform 2 of BSG/CD147. Post-translationally, thr-237 and Ser-239 may be phosphorylated; however as this position is probably extracellular, the in vivo relevance is not proven. As to expression, expressed in uterus and pancreas (at protein level).

It is found in the basolateral cell membrane. It localises to the apical cell membrane. The protein resides in the cell junction. The protein localises to the adherens junction. In terms of biological role, plays a role in cell adhesion and cell migration. The chain is Adherens junction-associated protein 1 (AJAP1) from Homo sapiens (Human).